The chain runs to 124 residues: Small ribosomal subunit protein uS12 (124 aa).

Disordered stretches follow at residues 9-32 (RKGR…QRRG) and 105-124 (QGVK…KEKS). Residues 108 to 118 (KNRKQARSRYG) are compositionally biased toward basic residues.

The protein belongs to the universal ribosomal protein uS12 family. In terms of assembly, part of the 30S ribosomal subunit. Contacts proteins S8 and S17. May interact with IF1 in the 30S initiation complex.

Its function is as follows. With S4 and S5 plays an important role in translational accuracy. Functionally, interacts with and stabilizes bases of the 16S rRNA that are involved in tRNA selection in the A site and with the mRNA backbone. Located at the interface of the 30S and 50S subunits, it traverses the body of the 30S subunit contacting proteins on the other side and probably holding the rRNA structure together. The combined cluster of proteins S8, S12 and S17 appears to hold together the shoulder and platform of the 30S subunit. This is Small ribosomal subunit protein uS12 from Nocardia farcinica (strain IFM 10152).